Consider the following 483-residue polypeptide: MFS-type transporter hepF (483 aa).

The segment at 1-31 (METPAGKADRPRDHDSEQSQDNVVSWEGEDD) is disordered. A compositionally biased stretch (basic and acidic residues) spans 7–17 (KADRPRDHDSE). 11 helical membrane passes run 89 to 109 (TIVV…AAPI), 124 to 144 (ILYT…MLIV), 147 to 167 (FFAG…VADL), 179 to 199 (FVTL…GFLT), 206 to 226 (WVFW…ILFT), 276 to 296 (PISL…YVLV), 311 to 331 (IGIS…GLWI), 357 to 377 (PMMI…GWSV), 385 to 405 (MPIV…MPMV), 416 to 436 (AASA…VLPL), and 448 to 468 (GWGN…LIAI).

It belongs to the major facilitator superfamily.

It is found in the cell membrane. MFS-type transporter; part of the gene cluster that mediates the biosynthesis of heptelidic acid (HA), a sesquiterpene lactone that acts as an inhibitor of glyceraldehyde-3-phosphatedehydrogenase (GAPDH) and a growth inhibitor of the salt-tolerant lactic acid bacteria in soy sauce brewing. Might be required for efficient secretion of heptelidic acid. This is MFS-type transporter hepF (hepF) from Aspergillus oryzae (strain ATCC 42149 / RIB 40) (Yellow koji mold).